The chain runs to 214 residues: MLNAREEEVLNVIIENVKLKGYPPSVREIGEAVGLSSSSTVHSYLKRLEQKGYLRRDPTKPRAIEVIMSELSKNPSSHPLTSELSRYSDEELISIPLLGEVAAGVPLLAVENYDEKVTLPRSFTGYGEFFMLSVRGDSMIEAGILPGDLVLVRRQESVSNGDIAVALLEDEATVKRFYKEKNRIRLQPENSLLSPIYVQEVKILGKVVGLMRKI.

Positions 26 to 46 (VREIGEAVGLSSSSTVHSYLK) form a DNA-binding region, H-T-H motif. Catalysis depends on for autocatalytic cleavage activity residues S138 and K175.

The protein belongs to the peptidase S24 family. As to quaternary structure, homodimer.

It catalyses the reaction Hydrolysis of Ala-|-Gly bond in repressor LexA.. In terms of biological role, represses a number of genes involved in the response to DNA damage (SOS response), including recA and lexA. In the presence of single-stranded DNA, RecA interacts with LexA causing an autocatalytic cleavage which disrupts the DNA-binding part of LexA, leading to derepression of the SOS regulon and eventually DNA repair. The sequence is that of LexA repressor from Desulforamulus reducens (strain ATCC BAA-1160 / DSM 100696 / MI-1) (Desulfotomaculum reducens).